A 170-amino-acid chain; its full sequence is Photosystem II extrinsic protein V (170 aa).

Positions 1–33 are cleaved as a signal peptide; the sequence is MASLFASLGRSLIKLLIVLPVIIGLSISSPAMA. Heme c contacts are provided by C70, C73, H74, and H125.

The protein belongs to the cytochrome c family. PsbV subfamily. As to quaternary structure, PSII is composed of 1 copy each of membrane proteins PsbA, PsbB, PsbC, PsbD, PsbE, PsbF, PsbH, PsbI, PsbJ, PsbK, PsbL, PsbM, PsbT, PsbX, PsbY, Psb30/Ycf12, peripheral proteins PsbO, CyanoQ (PsbQ), PsbU, PsbV and a large number of cofactors. It forms dimeric complexes. It depends on heme c as a cofactor.

It localises to the cellular thylakoid membrane. Its function is as follows. One of the extrinsic, lumenal subunits of photosystem II (PSII). PSII is a light-driven water plastoquinone oxidoreductase, using light energy to abstract electrons from H(2)O, generating a proton gradient subsequently used for ATP formation. The extrinsic proteins stabilize the structure of photosystem II oxygen-evolving complex (OEC), the ion environment of oxygen evolution and protect the OEC against heat-induced inactivation. Low-potential cytochrome c that plays a role in the OEC of PSII. In Prochlorococcus marinus (strain MIT 9313), this protein is Photosystem II extrinsic protein V.